The following is a 750-amino-acid chain: MFIGKKAPAALRKQLWPVFPTYNILGSRNIYVMSHERRKKAAKRKSDKLQQWAEQEEMRLAREKNQQYAKKLKELKQLTRSVASYVRTREARELEAQKIQELSLPSELGKGSEPAGLAAPRSAKIAPFDASAASLSTSAVPLPQSIQDRLGLAVKYLVSKDHQNWSIVLQQLEAAGGFDGLPQKDIRKMVYAIPKDQLRHVFPQIESLLGQAGLAVSPKLLNTYIKSLMLGRTLNDAQIAYIEGIVAKLRQEPGKEGKLGKLSRATYELLIEAYGKNTNVAKMNEVIQEMKELGLQLSPVVYTNVLSTCVYKTRDHQQAVKLFDSMKFLAGSMAPQTREYQDIIVSYVNNDDIEKALDLYQEMLDQKLDFNQNIMVALARGCMSREQLRFKAWDFIFEIYRCGWEPTANTLEYMLYLASKDGDLALARALYQQLNISNALSPRAFSFLFLAYARSNVGKSIEEFQPFAITVHEEGRNFRRNILEKVDLTPTTENPKQAVPYLPKISLSTPQEVLAESSAVMAHALMVNREFVNVESVTTFLNVAARMGSLDDFIDRYEEFTFLDKTGVTETKTVIEPEILESTSVLLAPKEPSPTKSPILAQVTESQKSAFKMPRNTITYLIALKAAAKHKNYIFAQKVWTERGTYRKSAGFRNLPKSEKEKLDFSFASGMVNCLTDMKLLDDALAILVSTEYQFKWTWKELSHLYAAAAEAGYDKVTKTIRGVVKRAQINFEGKIRRKDYKKYVMERGY.

A mitochondrion-targeting transit peptide spans 1-82 (MFIGKKAPAA…KELKQLTRSV (82 aa)). 4 PPR repeats span residues 263–297 (SRAT…GLQL), 298–333 (SPVV…AGSM), 336–370 (QTRE…KLDF), and 371–406 (NQNI…GWEP).

The protein belongs to the CCM1 family. In terms of assembly, binds to mitochondrial small subunit 15S rRNA.

Its subcellular location is the mitochondrion. Its function is as follows. Regulates mitochondrial small subunit maturation by controlling 15S rRNA 5'-end processing. Localizes to the 5' precursor of the 15S rRNA in a position that is subsequently occupied by mS47 in the mature yeast mtSSU. Uses structure and sequence-specific RNA recognition, binding to a single-stranded region of the precursor and specifically recognizing bases -6 to -1. The exchange of Ccm1 for mS47 is coupled to the irreversible removal of precursor rRNA that is accompanied by conformational changes of the mitoribosomal proteins uS5m and mS26. These conformational changes signal completion of 5'-end rRNA processing through protection of the mature 5'-end of the 15S rRNA and stabilization of mS47. The removal of the 5' precursor together with the dissociation of Ccm1 may be catalyzed by the 5'-3' exoribonuclease Pet127. Involved in the specific removal of group I introns in mitochondrial encoded transcripts. The polypeptide is Mitochondrial 15S rRNA processing factor CCM1 (CCM1) (Clavispora lusitaniae (strain ATCC 42720) (Yeast)).